Reading from the N-terminus, the 526-residue chain is Peptide chain release factor 3 (526 aa).

Residues 9 to 277 (DKRRTFAIIS…GIVEWAPKPQ (269 aa)) enclose the tr-type G domain. GTP is bound by residues 18 to 25 (SHPDAGKT), 86 to 90 (DTPGH), and 140 to 143 (NKLD).

This sequence belongs to the TRAFAC class translation factor GTPase superfamily. Classic translation factor GTPase family. PrfC subfamily.

The protein resides in the cytoplasm. Its function is as follows. Increases the formation of ribosomal termination complexes and stimulates activities of RF-1 and RF-2. It binds guanine nucleotides and has strong preference for UGA stop codons. It may interact directly with the ribosome. The stimulation of RF-1 and RF-2 is significantly reduced by GTP and GDP, but not by GMP. In Shewanella sediminis (strain HAW-EB3), this protein is Peptide chain release factor 3.